Here is a 240-residue protein sequence, read N- to C-terminus: Chromatin structure-remodeling complex protein BSH (240 aa).

This sequence belongs to the SNF5 family. Interacts with SWI3A and SWI3B, but not with BRM. Expressed in roots, stems, leaves, flowers and siliques.

It localises to the nucleus. Functionally, component of a multiprotein complex equivalent of the yeast SWI/SNF complex, an ATP-dependent chromatin-remodeling complex, which is required for the positive and negative regulation of gene expression of a large number of genes. It changes chromatin structure by altering DNA-histone contacts within a nucleosome, leading eventually to a change in nucleosome position, thus facilitating or repressing binding of gene-specific transcription factors. This is Chromatin structure-remodeling complex protein BSH (BSH) from Arabidopsis thaliana (Mouse-ear cress).